Consider the following 185-residue polypeptide: Elongation factor P (185 aa).

It belongs to the elongation factor P family.

The protein resides in the cytoplasm. It functions in the pathway protein biosynthesis; polypeptide chain elongation. Involved in peptide bond synthesis. Stimulates efficient translation and peptide-bond synthesis on native or reconstituted 70S ribosomes in vitro. Probably functions indirectly by altering the affinity of the ribosome for aminoacyl-tRNA, thus increasing their reactivity as acceptors for peptidyl transferase. This chain is Elongation factor P, found in Paraburkholderia phytofirmans (strain DSM 17436 / LMG 22146 / PsJN) (Burkholderia phytofirmans).